The chain runs to 68 residues: Large ribosomal subunit protein bL35 (68 aa).

The protein belongs to the bacterial ribosomal protein bL35 family.

The sequence is that of Large ribosomal subunit protein bL35 from Rickettsia canadensis (strain McKiel).